A 758-amino-acid polypeptide reads, in one-letter code: Xaa-Pro dipeptidyl-peptidase (758 aa).

Residues Ser-349, Asp-469, and His-499 each act as charge relay system in the active site.

This sequence belongs to the peptidase S15 family. As to quaternary structure, homodimer.

Its subcellular location is the cytoplasm. The enzyme catalyses Hydrolyzes Xaa-Pro-|- bonds to release unblocked, N-terminal dipeptides from substrates including Ala-Pro-|-p-nitroanilide and (sequentially) Tyr-Pro-|-Phe-Pro-|-Gly-Pro-|-Ile.. Its function is as follows. Removes N-terminal dipeptides sequentially from polypeptides having unsubstituted N-termini provided that the penultimate residue is proline. The chain is Xaa-Pro dipeptidyl-peptidase from Streptococcus uberis (strain ATCC BAA-854 / 0140J).